We begin with the raw amino-acid sequence, 1071 residues long: Intracellular phospholipase A2 (1071 aa).

Residues 1 to 22 (MTTTNKDGPFRQQYLPGVHKEP) form a disordered region. 7 ANK repeats span residues 411 to 440 (ENCY…TLFC), 479 to 508 (DGQS…KFTR), 510 to 539 (DRNE…EIAN), 544 to 570 (LGNS…ELGL), 578 to 610 (AGET…NMNA), 614 to 651 (HGNT…KINL), and 652 to 681 (RGES…TRCP). Residues 748–921 (ISMDGGGIRG…ISNNPALDLM (174 aa)) enclose the PNPLA domain. The short motif at 752-757 (GGGIRG) is the GXGXXG element. Positions 784–788 (GTSTG) match the GXSXG motif. The Nucleophile role is filled by Ser-786. Asp-908 functions as the Proton acceptor in the catalytic mechanism. Positions 908-910 (DGG) match the DGA/G motif.

This sequence belongs to the patatin family.

The enzyme catalyses a 1,2-diacyl-sn-glycero-3-phosphocholine + H2O = a 1-acyl-sn-glycero-3-phosphocholine + a fatty acid + H(+). In terms of biological role, phospholipase that plays a critical role during oogenesis, ovulation, and/or embryogenesis. The polypeptide is Intracellular phospholipase A2 (Caenorhabditis elegans).